Reading from the N-terminus, the 411-residue chain is Trigger factor (411 aa).

Residues 162–240 (EDLVVIDYTT…IKEVKRRQNI (79 aa)) form the PPIase FKBP-type domain.

The protein belongs to the FKBP-type PPIase family. Tig subfamily.

It is found in the cytoplasm. It catalyses the reaction [protein]-peptidylproline (omega=180) = [protein]-peptidylproline (omega=0). In terms of biological role, involved in protein export. Acts as a chaperone by maintaining the newly synthesized protein in an open conformation. Functions as a peptidyl-prolyl cis-trans isomerase. The polypeptide is Trigger factor (Thermodesulfovibrio yellowstonii (strain ATCC 51303 / DSM 11347 / YP87)).